Here is a 304-residue protein sequence, read N- to C-terminus: Aquaglyceroporin-3 (304 aa).

Residues 1–68 (MQSQPDNVAY…LRLNYRDYMG (68 aa)) lie on the Cytoplasmic side of the membrane. A helical membrane pass occupies residues 69 to 89 (ELLGTFVLLFMGNGVVATVII). At 90-95 (DGKLGF) the chain is on the extracellular side. Residues 96-116 (LSITLGWGIAVTMALYVSLGI) traverse the membrane as a helical segment. Residues 117–142 (SSGHLNPAVTVGNAVFGDFPWRKVPG) are Cytoplasmic-facing. The chain crosses the membrane as a helical span at residues 143-163 (YIAAQMLGAFLGAACAYGVFA). Residues 164-196 (DLLKAHGGGELIAFGEKGTAGVFSTYPRDSNGL) lie on the Extracellular side of the membrane. The chain crosses the membrane as a helical span at residues 197 to 217 (FSCIFGEFICTAMLLFCVCGI). At 218 to 231 (FDPNNSPAKGHEPL) the chain is on the cytoplasmic side. Residues 232–252 (AVGALVFAIGNNIGYSTGYAI) form a helical membrane-spanning segment. Residues 253 to 277 (NPARDFGPRVFSSFLYGGEVFSHAN) lie on the Extracellular side of the membrane. The helical transmembrane segment at 278–298 (YYFWVPLVIPLFGGIFGLFLY) threads the bilayer. Over 299 to 304 (KYFVPH) the chain is Cytoplasmic.

The protein belongs to the MIP/aquaporin (TC 1.A.8) family.

The protein resides in the cell membrane. It catalyses the reaction glycerol(in) = glycerol(out). It carries out the reaction H2O(in) = H2O(out). The enzyme catalyses urea(in) = urea(out). Functionally, mediates water and glycerol transport across the cell membrane. Permeable to urea. Permeable to methylamine/methylammonium. Permeable to dihydroxyacetone. Permeable to erythritol and ribitol. This is Aquaglyceroporin-3 from Trypanosoma brucei brucei.